Here is a 500-residue protein sequence, read N- to C-terminus: Protein farnesyltransferase subunit beta (500 aa).

Residues 117–140 are disordered; it reads LQNDDNNGNNNNRENNQNGGGFGG. Residues 119–133 show a composition bias toward low complexity; it reads NDDNNGNNNNRENNQ. PFTB repeat units lie at residues 121–162, 172–213, 220–261, 268–309, and 343–384; these read DNNG…YVIG, REAM…SMLN, ERGV…SILN, MNSL…IIIQ, and QEYV…SLSQ. (2E,6E)-farnesyl diphosphate contacts are provided by residues 246–249 and 288–291; these read HGGY and RTNK. Positions 294 and 296 each coordinate Zn(2+). (2E,6E)-farnesyl diphosphate is bound at residue 297 to 300; sequence YSYW. H372 serves as a coordination point for Zn(2+). Residues 402 to 451 are disordered; it reads FEQPSPPINKKSTNVFTISNNNNNNNNKNNNSDDNNNNSNNNNNNSENQL. Positions 420-449 are enriched in low complexity; the sequence is SNNNNNNNNKNNNSDDNNNNSNNNNNNSEN.

The protein belongs to the protein prenyltransferase subunit beta family. Heterodimer of fntA and fntB (farnesyltransferase). Heterodimer of an alpha and a beta subunit. Zn(2+) serves as cofactor.

It catalyses the reaction L-cysteinyl-[protein] + (2E,6E)-farnesyl diphosphate = S-(2E,6E)-farnesyl-L-cysteinyl-[protein] + diphosphate. In terms of biological role, catalyzes the transfer of a farnesyl moiety from farnesyl diphosphate to a cysteine at the fourth position from the C-terminus of several proteins. The beta subunit is responsible for peptide-binding. In Dictyostelium discoideum (Social amoeba), this protein is Protein farnesyltransferase subunit beta (fntB).